We begin with the raw amino-acid sequence, 419 residues long: Dimethylallyltryptophan synthase 1 (419 aa).

Positions 81, 82, and 90 each coordinate L-tryptophan. F81 is an L-tyrosine binding site. (2E)-geranyl diphosphate contacts are provided by R105, K187, Y189, R251, K253, and Y255. Positions 105, 187, 189, 251, 253, and 255 each coordinate dimethylallyl diphosphate. R257 contributes to the L-tryptophan binding site. R257 provides a ligand contact to L-tyrosine. 2 residues coordinate (2E)-geranyl diphosphate: K332 and Y334. Dimethylallyl diphosphate-binding residues include K332 and Y334. Y389 is a binding site for L-tryptophan. Position 389 (Y389) interacts with L-tyrosine. Y404 serves as a coordination point for (2E)-geranyl diphosphate.

It belongs to the tryptophan dimethylallyltransferase family.

It carries out the reaction L-tyrosine + dimethylallyl diphosphate = 4-O-dimethylallyl-L-tyrosine + diphosphate. In terms of biological role, dimethylallyltryptophan synthase; part of the DMATS1 gene cluster that mediates the biosynthesis of a reversely N-prenylated monomeric L-tryptophan (r-N-DMAT). DMATS1 catalyzes the reverse N-prenylation of L-Trp with DMAPP to yield N-dimethylallyl-L-tryptophan. DMATS1 exhibits unusually broad substrate specificity and can utilize geranyl diphosphate (GPP) or L-Tyr as an alternative prenyl donor or acceptor, respectively. Is able to catalyze both forward and reverse prenylation, i.e., at C1 or C3 of DMAPP; and it can catalyze C-N and C-O bond-forming reactions. The main product of the cluster is the reverse-N-dimethylallyl-L-tryptophan (r-N-DMAT) produced by the dimethylallyltryptophan synthase DMATS1 and it remains unclear whether this metabolite undergoes further modifications when silent gene clusters are activated. The acetylated form of r-N-DMAT, ac-r-N-DMAT, is also produced. The roles of the cytochrome P450 monooxygenase FFUJ_09176 and the methyltransferase FFUJ_09178 have still to be elucidated. This Gibberella fujikuroi (strain CBS 195.34 / IMI 58289 / NRRL A-6831) (Bakanae and foot rot disease fungus) protein is Dimethylallyltryptophan synthase 1.